Reading from the N-terminus, the 63-residue chain is Putative conjugal transfer lipoprotein XF_a0011.1 (63 aa).

An N-terminal signal peptide occupies residues 1-15 (MRYTFGIVTVYLLAG). Cysteine 16 is lipidated: N-palmitoyl cysteine. A lipid anchor (S-diacylglycerol cysteine) is attached at cysteine 16.

This sequence to B.suis ORF12 in VirB region.

The protein localises to the cell inner membrane. The chain is Putative conjugal transfer lipoprotein XF_a0011.1 from Xylella fastidiosa (strain 9a5c).